We begin with the raw amino-acid sequence, 207 residues long: dTTP/UTP pyrophosphatase (207 aa).

Catalysis depends on Asp-79, which acts as the Proton acceptor.

The protein belongs to the Maf family. YhdE subfamily. A divalent metal cation is required as a cofactor.

It localises to the cytoplasm. The enzyme catalyses dTTP + H2O = dTMP + diphosphate + H(+). The catalysed reaction is UTP + H2O = UMP + diphosphate + H(+). Nucleoside triphosphate pyrophosphatase that hydrolyzes dTTP and UTP. May have a dual role in cell division arrest and in preventing the incorporation of modified nucleotides into cellular nucleic acids. The polypeptide is dTTP/UTP pyrophosphatase (Rhodopseudomonas palustris (strain ATCC BAA-98 / CGA009)).